Here is a 535-residue protein sequence, read N- to C-terminus: Prolyl 4-hydroxylase subunit alpha-2 (535 aa).

Positions Met-1–Ala-21 are cleaved as a signal peptide. The N-linked (GlcNAc...) asparagine glycan is linked to Asn-115. The TPR repeat unit spans residues Ser-207 to His-240. The N-linked (GlcNAc...) asparagine glycan is linked to Asn-264. The Fe2OG dioxygenase domain occupies Thr-412–Glu-520. His-430 and Asp-432 together coordinate Fe cation. An N6-succinyllysine modification is found at Lys-480. His-501 is a Fe cation binding site. Lys-511 contacts 2-oxoglutarate.

It belongs to the P4HA family. As to quaternary structure, heterotetramer of two alpha-2 chains and two beta chains (P4HB) (the beta chain is the multi-functional PDI), where P4HB plays the role of a structural subunit; this tetramer catalyzes the formation of 4-hydroxyproline in collagen. Fe(2+) is required as a cofactor. L-ascorbate serves as cofactor. In terms of tissue distribution, expressed in the heart, placenta, lung and pancreas.

It is found in the endoplasmic reticulum lumen. It carries out the reaction L-prolyl-[collagen] + 2-oxoglutarate + O2 = trans-4-hydroxy-L-prolyl-[collagen] + succinate + CO2. With respect to regulation, inhibited by poly(L-proline) only at very high concentrations. In terms of biological role, catalyzes the post-translational formation of 4-hydroxyproline in -Xaa-Pro-Gly- sequences in collagens and other proteins. The polypeptide is Prolyl 4-hydroxylase subunit alpha-2 (P4HA2) (Homo sapiens (Human)).